Consider the following 413-residue polypeptide: Putative competence-damage inducible protein (413 aa).

Belongs to the CinA family.

This Halothermothrix orenii (strain H 168 / OCM 544 / DSM 9562) protein is Putative competence-damage inducible protein.